We begin with the raw amino-acid sequence, 150 residues long: Flagellar assembly factor FliW (150 aa).

Belongs to the FliW family. In terms of assembly, interacts with translational regulator CsrA and flagellin(s).

The protein resides in the cytoplasm. Functionally, acts as an anti-CsrA protein, binds CsrA and prevents it from repressing translation of its target genes, one of which is flagellin. Binds to flagellin and participates in the assembly of the flagellum. The sequence is that of Flagellar assembly factor FliW from Leptospira interrogans serogroup Icterohaemorrhagiae serovar Lai (strain 56601).